A 308-amino-acid chain; its full sequence is Ava biosynthesis cluster protein O (308 aa).

The protein operates within secondary metabolite biosynthesis. Its function is as follows. Part of the cluster that mediates the biosynthesis of a highly modified cyclo-arginine-tryptophan dipeptide (cRW). The first step of the pathway is perfornmed by the arginine-containing cyclodipeptide synthase (RCPDS) avaA that acts as the scaffold-generating enzyme and is responsible for formation of the cyclo-Arg-Trp (cRW) diketopiperazine. AvaB then acts as a multifunctional flavoenzyme that is responsible for generating the cyclo-Arg-formylkynurenine DKP, which can be deformylated by avaC. AvaB then further catalyzes an additional N-oxidation followed by cyclization and dehydration. The next step is an N-acetylation of the guanidine group catalyzed by the arginine N-acetyltransferase avaD. The roles of the additional enzymes identified within the ava cluster still have to be determined. The chain is Ava biosynthesis cluster protein O from Aspergillus versicolor.